We begin with the raw amino-acid sequence, 570 residues long: Urease subunit alpha (570 aa).

Residues 131–570 (GGMDSHIHFI…LPMAQRYFLF (440 aa)) form the Urease domain. Histidine 136, histidine 138, and lysine 219 together coordinate Ni(2+). Lysine 219 is modified (N6-carboxylysine). Residue histidine 221 participates in substrate binding. Ni(2+)-binding residues include histidine 248 and histidine 274. Histidine 322 functions as the Proton donor in the catalytic mechanism. Aspartate 362 lines the Ni(2+) pocket.

Belongs to the metallo-dependent hydrolases superfamily. Urease alpha subunit family. Heterotrimer of UreA (gamma), UreB (beta) and UreC (alpha) subunits. Three heterotrimers associate to form the active enzyme. Requires Ni cation as cofactor. In terms of processing, carboxylation allows a single lysine to coordinate two nickel ions.

Its subcellular location is the cytoplasm. It carries out the reaction urea + 2 H2O + H(+) = hydrogencarbonate + 2 NH4(+). It participates in nitrogen metabolism; urea degradation; CO(2) and NH(3) from urea (urease route): step 1/1. The protein is Urease subunit alpha of Allorhizobium ampelinum (strain ATCC BAA-846 / DSM 112012 / S4) (Agrobacterium vitis (strain S4)).